A 129-amino-acid chain; its full sequence is Ribosome-binding factor A (129 aa).

This sequence belongs to the RbfA family. Monomer. Binds 30S ribosomal subunits, but not 50S ribosomal subunits or 70S ribosomes.

The protein localises to the cytoplasm. Its function is as follows. One of several proteins that assist in the late maturation steps of the functional core of the 30S ribosomal subunit. Associates with free 30S ribosomal subunits (but not with 30S subunits that are part of 70S ribosomes or polysomes). Required for efficient processing of 16S rRNA. May interact with the 5'-terminal helix region of 16S rRNA. This is Ribosome-binding factor A from Stutzerimonas stutzeri (strain A1501) (Pseudomonas stutzeri).